Reading from the N-terminus, the 645-residue chain is Putative palmitoyltransferase ZDHHC13 (645 aa).

Residues Met1–Ser73 are disordered. Residues Met1–Lys314 lie on the Cytoplasmic side of the membrane. A compositionally biased stretch (basic and acidic residues) spans Asp7–His20. A compositionally biased stretch (basic residues) spans Gly23–Ser33. Residues His34–Met43 show a composition bias toward gly residues. 5 ANK repeats span residues Glu104 to Gln133, Leu138 to Leu167, Glu171 to Leu200, Asn204 to Ala234, and Asn239 to Met268. A helical transmembrane segment spans residues Val315–Met335. Position 336 (Arg336) is a topological domain, lumenal. The helical transmembrane segment at Thr337–Ala357 threads the bilayer. Residues Ser358–Leu369 lie on the Cytoplasmic side of the membrane. The helical transmembrane segment at Ile370–Phe390 threads the bilayer. Topologically, residues Leu391–Glu394 are lumenal. The chain crosses the membrane as a helical span at residues Pro395 to Ile415. The Cytoplasmic portion of the chain corresponds to Arg416 to Pro492. A DHHC domain is found at Ile449–Val499. Residues Phe493–Ile513 traverse the membrane as a helical segment. Residues Thr514–Trp542 are Lumenal-facing. The helical transmembrane segment at Leu543–Leu563 threads the bilayer. Residues Gln564–Val645 are Cytoplasmic-facing.

It belongs to the DHHC palmitoyltransferase family. AKR/ZDHHC17 subfamily.

The protein localises to the golgi apparatus membrane. It localises to the cytoplasmic vesicle membrane. Putative palmitoyltransferase that could catalyze the addition of palmitate onto various protein substrates. In Danio rerio (Zebrafish), this protein is Putative palmitoyltransferase ZDHHC13.